The sequence spans 370 residues: Glutamine synthetase (370 aa).

The GS beta-grasp domain maps to 23-102 (VLAEYVWIDA…VLTECWNNDG (80 aa)). The tract at residues 40–69 (CKTLDKKPSSVEDLPEWNFDGSSTGQAPGH) is disordered. The GS catalytic domain maps to 109 to 370 (HRHESAKLMK…FKEYARESSD (262 aa)).

It belongs to the glutamine synthetase family. Homooctamer.

The protein resides in the cytoplasm. The catalysed reaction is L-glutamate + NH4(+) + ATP = L-glutamine + ADP + phosphate + H(+). The polypeptide is Glutamine synthetase (GLN1) (Debaryomyces hansenii (strain ATCC 36239 / CBS 767 / BCRC 21394 / JCM 1990 / NBRC 0083 / IGC 2968) (Yeast)).